The primary structure comprises 148 residues: Cystatin-C (148 aa).

Positions 1 to 28 (MARSLGVPLLLLAALVVALALAVSPAAG) are cleaved as a signal peptide. Residues 83–87 (QIVSG) carry the Secondary area of contact motif. 2 disulfides stabilise this stretch: Cys-101–Cys-111 and Cys-125–Cys-145.

It belongs to the cystatin family.

It localises to the secreted. Its function is as follows. This is a thiol proteinase inhibitor. This Oryctolagus cuniculus (Rabbit) protein is Cystatin-C (CST3).